The sequence spans 270 residues: F-actin-capping protein subunit beta (270 aa).

Over residues 245–258 (QTRSQKSTTDSQEQ) the composition is skewed to polar residues. The segment at 245–270 (QTRSQKSTTDSQEQQQKEVIKGLQNL) is disordered.

Belongs to the F-actin-capping protein beta subunit family. In terms of assembly, component of the F-actin capping complex, composed of a heterodimer of an alpha and a beta subunit.

The protein resides in the cytoplasm. The protein localises to the cytoskeleton. It is found in the actin patch. In terms of biological role, F-actin-capping proteins bind in a Ca(2+)-independent manner to the fast growing ends of actin filaments (barbed end) thereby blocking the exchange of subunits at these ends. Unlike other capping proteins (such as gelsolin and severin), these proteins do not sever actin filaments. This is F-actin-capping protein subunit beta (CAP2) from Candida glabrata (strain ATCC 2001 / BCRC 20586 / JCM 3761 / NBRC 0622 / NRRL Y-65 / CBS 138) (Yeast).